Reading from the N-terminus, the 633-residue chain is Chaperone protein DnaK (633 aa).

T198 is subject to Phosphothreonine; by autocatalysis. Positions 599 to 633 are disordered; the sequence is QQASQETPGDGDAGAAGAKKKDDDDVVDADYEEVK. A compositionally biased stretch (acidic residues) spans 622-633; it reads DDVVDADYEEVK.

It belongs to the heat shock protein 70 family.

In terms of biological role, acts as a chaperone. This is Chaperone protein DnaK from Desulfotalea psychrophila (strain LSv54 / DSM 12343).